Consider the following 1222-residue polypeptide: Alpha-mannosidase D (1222 aa).

Residues 1 to 21 (MESSKFVKIIWVFGIWILVFT) form the signal peptide. At 22-1170 (FLIIYNNYDY…KYNRPNHLAL (1149 aa)) the chain is on the extracellular side. The Zn(2+) site is built by His71 and Asp73. N-linked (GlcNAc...) asparagine glycosylation is present at Asn175. Positions 185 and 453 each coordinate Zn(2+). Asp185 serves as the catalytic Nucleophile. N-linked (GlcNAc...) asparagine glycans are attached at residues Asn492, Asn496, Asn547, Asn551, Asn566, Asn613, Asn665, Asn768, Asn785, Asn952, Asn981, Asn1069, and Asn1084. A compositionally biased stretch (low complexity) spans 493 to 549 (KSNNKTNNNNNNNNKNNNNNNNNNNNNNNNLKNTNSISTTGSSSSSGSGSSNNNNNT). The segment at 493–554 (KSNNKTNNNN…NNNNTVNKSE (62 aa)) is disordered. The chain crosses the membrane as a helical span at residues 1171 to 1191 (ILSLSIGIPAGILIIVIALVV). At 1192-1222 (TYKKRKNRKTLTSSNSSSNLIQQEDQTDYSP) the chain is on the cytoplasmic side. A compositionally biased stretch (low complexity) spans 1202-1211 (LTSSNSSSNL). The segment at 1202 to 1222 (LTSSNSSSNLIQQEDQTDYSP) is disordered. Residues 1212-1222 (IQQEDQTDYSP) show a composition bias toward polar residues.

Belongs to the glycosyl hydrolase 38 family. Zn(2+) is required as a cofactor.

It is found in the membrane. The catalysed reaction is Hydrolysis of terminal, non-reducing alpha-D-mannose residues in alpha-D-mannosides.. The polypeptide is Alpha-mannosidase D (manD) (Dictyostelium discoideum (Social amoeba)).